We begin with the raw amino-acid sequence, 81 residues long: MANKLFLISLLCVVLVAKIAQAAPQYAPGEEPSYDEDTDDKLIENDTSITDEDYAEIEASLSQAFGTAADPGRRLGEGKKP.

Positions 1-22 are cleaved as a signal peptide; the sequence is MANKLFLISLLCVVLVAKIAQA. The N-linked (GlcNAc...) asparagine glycan is linked to Asn-45. The tract at residues 70–73 is blocks active site cleft of host thrombin in a reverse direction compared to substrates; sequence DPGR.

The protein belongs to the anophelin family. In terms of assembly, interacts with human F2 (thrombin); the interaction results in thrombin inhibition.

It is found in the secreted. In terms of biological role, salivary protein with anticoagulant activity that inhibits host thrombin (F2). The protein is Salivary thrombin inhibitor anophelin of Anopheles darlingi (Mosquito).